The sequence spans 444 residues: Pre-mRNA-splicing factor cwc25 (444 aa).

Disordered stretches follow at residues 1–27, 168–385, and 397–425; these read MGSG…QKAE, LASM…TDLD, and EAER…GFMS. A coiled-coil region spans residues 19-65; sequence NVAATQKAEAEAIAERKKLQQRLQEIEEERRKEEIQKALEAAGGKRK. Over residues 186–199 the composition is skewed to basic residues; it reads QRRHKHRSHHHRSD. 2 stretches are compositionally biased toward basic and acidic residues: residues 200 to 220 and 228 to 281; these read RHRD…DRDR and DSRD…DDRS. Basic residues predominate over residues 282–293; sequence RRHRFPQGRSRS. 3 stretches are compositionally biased toward basic and acidic residues: residues 305-344, 360-372, and 397-410; these read RREY…EQPK, DGDH…ERAK, and EAER…EKAR. Residues 364 to 417 are a coiled coil; sequence KNAEEERAKKLAAMQAAATDLDKAREERLKALAEAERAEREADEKARQQNKKFR.

This sequence belongs to the CWC25 family. In terms of assembly, associated with the spliceosome.

The protein localises to the nucleus. In terms of biological role, involved in pre-mRNA splicing. The chain is Pre-mRNA-splicing factor cwc25 (msp-6) from Neurospora crassa (strain ATCC 24698 / 74-OR23-1A / CBS 708.71 / DSM 1257 / FGSC 987).